The primary structure comprises 218 residues: Dehydration-responsive element-binding protein 1B (218 aa).

Positions 1-26 (MEVEEAAYRTVWSEPPKRPAGRTKFR) are disordered. Residues 32-95 (VYRGVRRRGG…RGRAACLNFA (64 aa)) constitute a DNA-binding region (AP2/ERF). Positions 131–151 (SAAPSSPAETFANDGDEEEDN) are disordered.

This sequence belongs to the AP2/ERF transcription factor family. ERF subfamily.

It is found in the nucleus. In terms of biological role, transcriptional activator that binds specifically to the DNA sequence 5'-[AG]CCGAC-3'. Binding to the C-repeat/DRE element mediates high salinity- and dehydration-inducible transcription. Confers resistance to high salt, cold and drought stress. The protein is Dehydration-responsive element-binding protein 1B (DREB1B) of Oryza sativa subsp. japonica (Rice).